We begin with the raw amino-acid sequence, 295 residues long: Small ribosomal subunit biogenesis GTPase RsgA (295 aa).

The region spanning 68–228 (KNLLTKPHVA…VVDTPGFANL (161 aa)) is the CP-type G domain. GTP-binding positions include 117-120 (NKMD) and 170-178 (GLSGVGKSS). Zn(2+) is bound by residues C250, C255, H257, and C263.

This sequence belongs to the TRAFAC class YlqF/YawG GTPase family. RsgA subfamily. In terms of assembly, monomer. Associates with 30S ribosomal subunit, binds 16S rRNA. Zn(2+) is required as a cofactor.

The protein resides in the cytoplasm. Its function is as follows. One of several proteins that assist in the late maturation steps of the functional core of the 30S ribosomal subunit. Helps release RbfA from mature subunits. May play a role in the assembly of ribosomal proteins into the subunit. Circularly permuted GTPase that catalyzes slow GTP hydrolysis, GTPase activity is stimulated by the 30S ribosomal subunit. This Thermotoga petrophila (strain ATCC BAA-488 / DSM 13995 / JCM 10881 / RKU-1) protein is Small ribosomal subunit biogenesis GTPase RsgA.